The following is a 142-amino-acid chain: HTH-type transcriptional regulator MntR (142 aa).

The HTH dtxR-type domain maps to 1–63; sequence MPTPSMEDYI…YEKYRGLVLT (63 aa). Residues Asp8, Glu11, His77, Glu99, Glu102, and His103 each contribute to the Mn(2+) site.

This sequence belongs to the DtxR/MntR family. In terms of assembly, homodimer.

Its subcellular location is the cytoplasm. Its activity is regulated as follows. DNA binding is strongly activated by Mn(2+). Its function is as follows. Central regulator of manganese homeostasis. The protein is HTH-type transcriptional regulator MntR of Bacillus cereus (strain ATCC 14579 / DSM 31 / CCUG 7414 / JCM 2152 / NBRC 15305 / NCIMB 9373 / NCTC 2599 / NRRL B-3711).